A 366-amino-acid chain; its full sequence is Class I histocompatibility antigen, Gogo-C*0202 alpha chain (366 aa).

An N-terminal signal peptide occupies residues 1-24; that stretch reads MRVMAPRTLILLLSGALALTETWA. The interval 25–114 is alpha-1; sequence GSHSMRYFYT…LRGYYNQSED (90 aa). Residues 25–308 are Extracellular-facing; the sequence is GSHSMRYFYT…EPSSQPTIPI (284 aa). N-linked (GlcNAc...) asparagine glycosylation occurs at asparagine 110. The tract at residues 115 to 206 is alpha-2; the sequence is GSHTLQSMYG…ENGKETLQRA (92 aa). Disulfide bonds link cysteine 125–cysteine 188 and cysteine 227–cysteine 283. An alpha-3 region spans residues 207–298; that stretch reads EPPKTHVTHH…GLPEPLTLRW (92 aa). Positions 209–297 constitute an Ig-like C1-type domain; sequence PKTHVTHHPL…EGLPEPLTLR (89 aa). Residues 299-308 are connecting peptide; it reads EPSSQPTIPI. The chain crosses the membrane as a helical span at residues 309 to 332; the sequence is VGIVVGLAVLVVLAVLGAVVTAMM. Topologically, residues 333-366 are cytoplasmic; it reads CRRKSSGGKGGSCSQAACSNSAQGSDESLITCKA.

The protein belongs to the MHC class I family. In terms of assembly, heterodimer of an alpha chain and a beta chain (beta-2-microglobulin).

It localises to the membrane. Its function is as follows. Involved in the presentation of foreign antigens to the immune system. The sequence is that of Class I histocompatibility antigen, Gogo-C*0202 alpha chain from Gorilla gorilla gorilla (Western lowland gorilla).